The following is a 565-amino-acid chain: NAD-dependent malic enzyme (565 aa).

Y104 acts as the Proton donor in catalysis. Residue R157 participates in NAD(+) binding. Catalysis depends on K175, which acts as the Proton acceptor. Residues E246, D247, and D270 each coordinate a divalent metal cation. NAD(+)-binding residues include D270 and N418.

Belongs to the malic enzymes family. In terms of assembly, homotetramer. Requires Mg(2+) as cofactor. Mn(2+) serves as cofactor.

The enzyme catalyses (S)-malate + NAD(+) = pyruvate + CO2 + NADH. It catalyses the reaction oxaloacetate + H(+) = pyruvate + CO2. The protein is NAD-dependent malic enzyme of Shigella boydii serotype 18 (strain CDC 3083-94 / BS512).